We begin with the raw amino-acid sequence, 323 residues long: Homoserine kinase (323 aa).

An ATP-binding site is contributed by 97 to 107; the sequence is PHGRGMGSSGA.

The protein belongs to the GHMP kinase family. Homoserine kinase subfamily.

The protein localises to the cytoplasm. It carries out the reaction L-homoserine + ATP = O-phospho-L-homoserine + ADP + H(+). Its pathway is amino-acid biosynthesis; L-threonine biosynthesis; L-threonine from L-aspartate: step 4/5. Functionally, catalyzes the ATP-dependent phosphorylation of L-homoserine to L-homoserine phosphate. The polypeptide is Homoserine kinase (Leifsonia xyli subsp. xyli (strain CTCB07)).